The chain runs to 626 residues: Procollagen galactosyltransferase 2 (626 aa).

Residues 1–27 (MAARPAATLAWSLLLLSSALLREGCRA) form the signal peptide. Asn97, Asn185, Asn382, and Asn580 each carry an N-linked (GlcNAc...) asparagine glycan. Residues 604–626 (NAKNTEALPPPTSLDTVPSRDEL) are disordered. Residues 623–626 (RDEL) carry the Prevents secretion from ER motif.

Belongs to the glycosyltransferase 25 family. Expressed in brain and skeletal muscle.

It is found in the endoplasmic reticulum lumen. It carries out the reaction (5R)-5-hydroxy-L-lysyl-[collagen] + UDP-alpha-D-galactose = (5R)-5-O-(beta-D-galactosyl)-5-hydroxy-L-lysyl-[collagen] + UDP + H(+). In terms of biological role, beta-galactosyltransferase that transfers beta-galactose to hydroxylysine residues of collagen. The protein is Procollagen galactosyltransferase 2 (COLGALT2) of Homo sapiens (Human).